Consider the following 408-residue polypeptide: Peptidase T (408 aa).

His81 provides a ligand contact to Zn(2+). Residue Asp83 is part of the active site. A Zn(2+)-binding site is contributed by Asp142. Glu176 (proton acceptor) is an active-site residue. The Zn(2+) site is built by Glu177, Asp199, and His381.

It belongs to the peptidase M20B family. Requires Zn(2+) as cofactor.

It localises to the cytoplasm. The catalysed reaction is Release of the N-terminal residue from a tripeptide.. Its function is as follows. Cleaves the N-terminal amino acid of tripeptides. The sequence is that of Peptidase T from Streptococcus gordonii (strain Challis / ATCC 35105 / BCRC 15272 / CH1 / DL1 / V288).